Reading from the N-terminus, the 546-residue chain is Glucose-6-phosphate isomerase (546 aa).

Catalysis depends on Glu-352, which acts as the Proton donor. Catalysis depends on residues His-383 and Lys-511.

Belongs to the GPI family.

Its subcellular location is the cytoplasm. The enzyme catalyses alpha-D-glucose 6-phosphate = beta-D-fructose 6-phosphate. It participates in carbohydrate biosynthesis; gluconeogenesis. Its pathway is carbohydrate degradation; glycolysis; D-glyceraldehyde 3-phosphate and glycerone phosphate from D-glucose: step 2/4. Its function is as follows. Catalyzes the reversible isomerization of glucose-6-phosphate to fructose-6-phosphate. The polypeptide is Glucose-6-phosphate isomerase (Paramagnetospirillum magneticum (strain ATCC 700264 / AMB-1) (Magnetospirillum magneticum)).